Consider the following 507-residue polypeptide: Maturase K (507 aa).

It belongs to the intron maturase 2 family. MatK subfamily.

Its subcellular location is the plastid. It is found in the chloroplast. Usually encoded in the trnK tRNA gene intron. Probably assists in splicing its own and other chloroplast group II introns. The polypeptide is Maturase K (Umbellularia californica (California bay laurel)).